We begin with the raw amino-acid sequence, 111 residues long: MISDKIKLTAKDILEKEFKTGMRGYQQEEVDKFLDMIIKDYEVFHKELEQLQQQNARLKRELEEQKLAAAQAPQQTIPTPAAQPVYSNTNTDILKRLSNLEKAVFGSKLYE.

Residues 34 to 72 (LDMIIKDYEVFHKELEQLQQQNARLKRELEEQKLAAAQA) adopt a coiled-coil conformation.

The protein belongs to the GpsB family. Forms polymers through the coiled coil domains. Interacts with PBP1, MreC and EzrA.

Its subcellular location is the cytoplasm. In terms of biological role, divisome component that associates with the complex late in its assembly, after the Z-ring is formed, and is dependent on DivIC and PBP2B for its recruitment to the divisome. Together with EzrA, is a key component of the system that regulates PBP1 localization during cell cycle progression. Its main role could be the removal of PBP1 from the cell pole after pole maturation is completed. Also contributes to the recruitment of PBP1 to the division complex. Not essential for septum formation. The protein is Cell cycle protein GpsB of Bacillus cytotoxicus (strain DSM 22905 / CIP 110041 / 391-98 / NVH 391-98).